A 387-amino-acid chain; its full sequence is Succinate--CoA ligase [ADP-forming] subunit beta (387 aa).

ATP is bound by residues Lys-46, 53 to 55 (GRG), Glu-99, Ala-102, and Glu-107. Residues Asn-199 and Asp-213 each coordinate Mg(2+). Residues Asn-264 and 321-323 (GIV) each bind substrate.

Belongs to the succinate/malate CoA ligase beta subunit family. Heterotetramer of two alpha and two beta subunits. Requires Mg(2+) as cofactor.

The enzyme catalyses succinate + ATP + CoA = succinyl-CoA + ADP + phosphate. It carries out the reaction GTP + succinate + CoA = succinyl-CoA + GDP + phosphate. It participates in carbohydrate metabolism; tricarboxylic acid cycle; succinate from succinyl-CoA (ligase route): step 1/1. Its function is as follows. Succinyl-CoA synthetase functions in the citric acid cycle (TCA), coupling the hydrolysis of succinyl-CoA to the synthesis of either ATP or GTP and thus represents the only step of substrate-level phosphorylation in the TCA. The beta subunit provides nucleotide specificity of the enzyme and binds the substrate succinate, while the binding sites for coenzyme A and phosphate are found in the alpha subunit. The protein is Succinate--CoA ligase [ADP-forming] subunit beta of Campylobacter jejuni subsp. jejuni serotype O:23/36 (strain 81-176).